A 427-amino-acid chain; its full sequence is tRNA(Ile)-lysidine synthase (427 aa).

Position 18–23 (18–23 (SGGLDS)) interacts with ATP.

This sequence belongs to the tRNA(Ile)-lysidine synthase family.

The protein resides in the cytoplasm. It catalyses the reaction cytidine(34) in tRNA(Ile2) + L-lysine + ATP = lysidine(34) in tRNA(Ile2) + AMP + diphosphate + H(+). Functionally, ligates lysine onto the cytidine present at position 34 of the AUA codon-specific tRNA(Ile) that contains the anticodon CAU, in an ATP-dependent manner. Cytidine is converted to lysidine, thus changing the amino acid specificity of the tRNA from methionine to isoleucine. The chain is tRNA(Ile)-lysidine synthase from Pseudomonas putida (strain ATCC 47054 / DSM 6125 / CFBP 8728 / NCIMB 11950 / KT2440).